The chain runs to 76 residues: uncharacterized protein (76 aa).

The next 2 membrane-spanning stretches (helical) occupy residues 16–33 (FAFT…GAVL) and 45–61 (TMFL…FFCA).

It is found in the cell membrane. This is an uncharacterized protein from Bacillus subtilis (strain 168).